Reading from the N-terminus, the 719-residue chain is Forkhead box protein K1 (719 aa).

A2 bears the N-acetylalanine mark. The interaction with SIN3A and SIN3B stretch occupies residues 2-40 (AEVGEDSGARALLALRSAPCSPVLCAAAAAAAFPATTSP). The interval 35-67 (PATTSPPPPAQPPPGPPALPAEPGPGPVPSTVA) is disordered. Residues 38–62 (TSPPPPAQPPPGPPALPAEPGPGPV) are compositionally biased toward pro residues. Residues 81 to 406 (AASVRQSPGP…PLSSRSAPAS (326 aa)) form a required for interaction with FOXO4 and MEF2C region. At S87 the chain carries Phosphoserine. One can recognise an FHA domain in the interval 109 to 161 (VTIGRNSSQGSVDLSMGLSSFISRRHLQLSFQEPHFYLRCLGKNGVFVDGAFQ). An omega-N-methylarginine mark is found at R147 and R177. Residues S199, S209, S225, and S229 each carry the phosphoserine modification. Phosphothreonine occurs at positions 231 and 233. Phosphoserine occurs at positions 239, 243, 281, and 285. The segment at residues 291–386 (KPPYSYAQLI…EQAFRKRRQR (96 aa)) is a DNA-binding region (fork-head). The segment at 399–443 (SSRSAPASPTHPGLMSPRSSGLQTPECLSREGSPIPHDPDLGSKL) is disordered. A phosphoserine mark is found at S402 and S406. T408 carries the phosphothreonine modification. S414 carries the phosphoserine modification. T422 is subject to Phosphothreonine. S427, S431, and S445 each carry phosphoserine. Low complexity predominate over residues 665 to 685 (AANAAPTPAASTTTSASSSGE). The segment at 665–719 (AANAAPTPAASTTTSASSSGEPEVKRSRVEEPGGTATTQPTAMAATGPQGPGTGE) is disordered. A compositionally biased stretch (basic and acidic residues) spans 686–695 (PEVKRSRVEE). Positions 696–712 (PGGTATTQPTAMAATGP) are enriched in low complexity.

In terms of assembly, interacts with SIN3A and SIN3B (via PAH2) to form a complex which represses transcription. Component of SIN3A-, but not SIN3B-, containing multiprotein complexes. Interacts with FOXO4 and MEF2C; both interactions inhibit FOXO4 and MEF2C transactivation activity. Interacts (when phosphorylated) with YWHAE/14-3-3-epsilon; promotes sequestration in the cytoplasm and leads to impaired ability to bind DNA. Interacts with FHL2. Interacts with SRF. Interacts with DVL2 and DVL3; the interaction induces DVL2 nuclear translocation. Interacts with BAP1 (when phosphorylated). Accessory component of the polycomb repressive deubiquitinase (PR-DUB) complex, at least composed of BAP1, one of ASXL1, ASXL2 or (probably) ASXL3 and one of MBD5 or MBD6. The PR-DUB core associates with a number of accessory proteins, including FOXK1, FOXK2, KDM1B, HCFC1 and OGT. Post-translationally, phosphorylation by GSK3 (GSK3A or GSK3B) promotes interaction with YWHAE/14-3-3-epsilon and retention in the cytoplasm. In response to mTORC1 signaling, phosphorylation by GSK3 is prevented, leading to translocation to the nucleus. In terms of tissue distribution, expressed in tissues and cells in which the myoglobin gene is transcriptionally active including cardiac and skeletal myocytes, brain and kidney. In the adult brain, expressed in the piriform cortex and the indusium griseum. In the hippocampus, expression is localized to the dentate gyrus and CA3 area. In the cerebellum, expression is confined to the Purkinje cell layer. Present in neuroretinal cells: expressed in rod bipolar cells, amacrine cells and ganglion cells (at protein level).

It is found in the nucleus. The protein localises to the cytoplasm. Transcriptional regulator involved in different processes such as glucose metabolism, aerobic glycolysis, muscle cell differentiation and autophagy. Recognizes and binds the forkhead DNA sequence motif (5'-GTAAACA-3') and can both act as a transcription activator or repressor, depending on the context. Together with FOXK2, acts as a key regulator of metabolic reprogramming towards aerobic glycolysis, a process in which glucose is converted to lactate in the presence of oxygen. Acts by promoting expression of enzymes for glycolysis (such as hexokinase-2 (HK2), phosphofructokinase, pyruvate kinase (PKLR) and lactate dehydrogenase), while suppressing further oxidation of pyruvate in the mitochondria by up-regulating pyruvate dehydrogenase kinases PDK1 and PDK4. Probably plays a role in gluconeogenesis during overnight fasting, when lactate from white adipose tissue and muscle is the main substrate. Involved in mTORC1-mediated metabolic reprogramming: in response to mTORC1 signaling, translocates into the nucleus and regulates the expression of genes associated with glycolysis and downstream anabolic pathways, such as HIF1A, thereby regulating glucose metabolism. Together with FOXK2, acts as a negative regulator of autophagy in skeletal muscle: in response to starvation, enters the nucleus, binds the promoters of autophagy genes and represses their expression, preventing proteolysis of skeletal muscle proteins. Acts as a transcriptional regulator of the myogenic progenitor cell population in skeletal muscle. Binds to the upstream enhancer region (CCAC box) of myoglobin (MB) gene, regulating the myogenic progenitor cell population. Promotes muscle progenitor cell proliferation by repressing the transcriptional activity of FOXO4, thereby inhibiting myogenic differentiation. Involved in remodeling processes of adult muscles that occur in response to physiological stimuli. Required to correct temporal orchestration of molecular and cellular events necessary for muscle repair. Represses myogenic differentiation by inhibiting MEFC activity. Positively regulates Wnt/beta-catenin signaling by translocating DVL into the nucleus. Reduces virus replication, probably by binding the interferon stimulated response element (ISRE) to promote antiviral gene expression. Accessory component of the polycomb repressive deubiquitinase (PR-DUB) complex; recruits the PR-DUB complex to specific FOXK1-bound genes. This chain is Forkhead box protein K1, found in Mus musculus (Mouse).